The following is a 269-amino-acid chain: MSNPESLKKQVEPPGYNELFMVEDVCNVDLEQGLDLCKPEKVNKQSQRSRQSRQSLFTNTIKPQKDKMNIKTNKIKEFLNDLFTEFSKFHNSYYPDGRISTRSNFRWPLLIIWSIIIVFAVDKKFEVQKFLSIWINENRFYSEIWVPIAIYVCLLVLMLLSLIFFAEFAVLALRVTGVIIAVLGMIIAVLGMIIAALGATITGLLYFGHWALYKLVILSLGFKIVTPGDVCVSNTLPTHNGETALHSETTVGSDIEQIELQNMPTPVKK.

The next 4 helical transmembrane spans lie at 107 to 127 (WPLL…KFEV), 144 to 164 (IWVP…SLIF), 177 to 197 (GVII…IAAL), and 201 to 221 (ITGL…LSLG).

The protein belongs to the UPF0494 family.

The protein resides in the vacuole membrane. The sequence is that of UPF0494 membrane protein C1348.01 from Schizosaccharomyces pombe (strain 972 / ATCC 24843) (Fission yeast).